Reading from the N-terminus, the 456-residue chain is Glutamate-gated chloride channel (456 aa).

The signal sequence occupies residues 1–22 (MGSGHYFWAILYFASLCSASLA). At 23-245 (NNAKINFREK…VDLLFKREFS (223 aa)) the chain is on the extracellular side. The L-glutamate site is built by Arg-71, Arg-90, and Ser-154. Residues Cys-163 and Cys-177 are joined by a disulfide bond. Ser-183 contributes to the L-glutamate binding site. The cysteines at positions 222 and 233 are disulfide-linked. The chain crosses the membrane as a helical span at residues 246 to 268 (YYLIQIYIPCCMLVIVSWVSFWL). Residues 269–273 (DQGAV) are Cytoplasmic-facing. A helical membrane pass occupies residues 274 to 295 (PARVSLGVTTLLTMATQTSGIN). At 296–302 (ASLPPVS) the chain is on the extracellular side. The helical transmembrane segment at 303–323 (YTKAIDVWTGVCLTFVFGALL) threads the bilayer. The Cytoplasmic portion of the chain corresponds to 324–426 (EFALVNYASR…RQCSRSKRID (103 aa)). A helical membrane pass occupies residues 427–450 (VISRITFPLVFALFNLVYWSTYLF). The Extracellular portion of the chain corresponds to 451–456 (REEEDE).

The protein belongs to the ligand-gated ion channel (TC 1.A.9) family. Glutamate-gated chloride channel (TC 1.A.9.4) subfamily. In terms of assembly, pentamer. Homomultimer. Expressed in the medulla layers (at protein level). Expressed in all major ON pathway medulla neurons (Mi1, Tm3, Mi4, and Mi9) and in OFF pathway neurons (Tm1, Tm2, Tm4, and Tm9).

It localises to the postsynaptic cell membrane. The protein resides in the cell membrane. Its activity is regulated as follows. Glutamate binding triggers a rapidly reversible current, while the anti-helmintic drug ivermectin triggers a permanently open channel configuration. Inhibited by picrotoxin. In terms of biological role, glutamate-gated chloride channel subunit. Together with Gamma-aminobutyric acid receptor Rdl, plays an important role in the visual response by regulating the activity of ON/OFF-selective neurons. This is Glutamate-gated chloride channel (GluClalpha) from Drosophila melanogaster (Fruit fly).